The chain runs to 222 residues: Ras-related protein RabT1 (222 aa).

Residue 37 to 44 (GDNKTGKS) coordinates GTP. Residues 59-66 (VSSIGVDF) carry the Effector region motif. GTP contacts are provided by residues 85-89 (DVNSC) and 145-148 (NKCD). A Cysteine methyl ester modification is found at Cys-219. A lipid anchor (S-geranylgeranyl cysteine) is attached at Cys-219. Residues 220 to 222 (NIL) constitute a propeptide, removed in mature form.

The protein belongs to the small GTPase superfamily. Rab family.

Its subcellular location is the cell membrane. This Dictyostelium discoideum (Social amoeba) protein is Ras-related protein RabT1 (rabT1).